Reading from the N-terminus, the 1333-residue chain is DNA-directed RNA polymerase subunit beta' (1333 aa).

Zn(2+) contacts are provided by C60, C62, C75, and C78. Positions 535, 537, and 539 each coordinate Mg(2+). 4 residues coordinate Zn(2+): C901, C983, C990, and C993.

It belongs to the RNA polymerase beta' chain family. As to quaternary structure, the RNAP catalytic core consists of 2 alpha, 1 beta, 1 beta' and 1 omega subunit. When a sigma factor is associated with the core the holoenzyme is formed, which can initiate transcription. Requires Mg(2+) as cofactor. The cofactor is Zn(2+).

The catalysed reaction is RNA(n) + a ribonucleoside 5'-triphosphate = RNA(n+1) + diphosphate. Functionally, DNA-dependent RNA polymerase catalyzes the transcription of DNA into RNA using the four ribonucleoside triphosphates as substrates. The polypeptide is DNA-directed RNA polymerase subunit beta' (Corynebacterium glutamicum (strain ATCC 13032 / DSM 20300 / JCM 1318 / BCRC 11384 / CCUG 27702 / LMG 3730 / NBRC 12168 / NCIMB 10025 / NRRL B-2784 / 534)).